Consider the following 293-residue polypeptide: Diaminopimelate epimerase (293 aa).

Residues asparagine 17, glutamine 49, and asparagine 69 each coordinate substrate. Cysteine 78 serves as the catalytic Proton donor. Residues 79 to 80 (GN), asparagine 169, asparagine 203, and 221 to 222 (ER) each bind substrate. The active-site Proton acceptor is the cysteine 230. Position 231-232 (231-232 (GS)) interacts with substrate.

Belongs to the diaminopimelate epimerase family. In terms of assembly, homodimer.

The protein resides in the cytoplasm. It carries out the reaction (2S,6S)-2,6-diaminopimelate = meso-2,6-diaminopimelate. It functions in the pathway amino-acid biosynthesis; L-lysine biosynthesis via DAP pathway; DL-2,6-diaminopimelate from LL-2,6-diaminopimelate: step 1/1. In terms of biological role, catalyzes the stereoinversion of LL-2,6-diaminopimelate (L,L-DAP) to meso-diaminopimelate (meso-DAP), a precursor of L-lysine and an essential component of the bacterial peptidoglycan. The polypeptide is Diaminopimelate epimerase (Methylobacterium sp. (strain 4-46)).